Consider the following 313-residue polypeptide: Porphobilinogen deaminase (313 aa).

An S-(dipyrrolylmethanemethyl)cysteine modification is found at C242.

It belongs to the HMBS family. In terms of assembly, monomer. It depends on dipyrromethane as a cofactor.

The catalysed reaction is 4 porphobilinogen + H2O = hydroxymethylbilane + 4 NH4(+). Its pathway is porphyrin-containing compound metabolism; protoporphyrin-IX biosynthesis; coproporphyrinogen-III from 5-aminolevulinate: step 2/4. Its function is as follows. Tetrapolymerization of the monopyrrole PBG into the hydroxymethylbilane pre-uroporphyrinogen in several discrete steps. The polypeptide is Porphobilinogen deaminase (hemC) (Proteus mirabilis).